We begin with the raw amino-acid sequence, 285 residues long: 2-dehydro-3-deoxyphosphooctonate aldolase (285 aa).

Belongs to the KdsA family.

It is found in the cytoplasm. It carries out the reaction D-arabinose 5-phosphate + phosphoenolpyruvate + H2O = 3-deoxy-alpha-D-manno-2-octulosonate-8-phosphate + phosphate. Its pathway is carbohydrate biosynthesis; 3-deoxy-D-manno-octulosonate biosynthesis; 3-deoxy-D-manno-octulosonate from D-ribulose 5-phosphate: step 2/3. It participates in bacterial outer membrane biogenesis; lipopolysaccharide biosynthesis. The polypeptide is 2-dehydro-3-deoxyphosphooctonate aldolase (Paracidovorax citrulli (strain AAC00-1) (Acidovorax citrulli)).